A 325-amino-acid polypeptide reads, in one-letter code: Collagen alpha-1(IX) chain (325 aa).

Over residues 1–54 (PGQLGNSGKPGQQGPPGEVGPRGPRGLPGSRGPVGPEGSPGIPGKLGPLGSPGL) the composition is skewed to low complexity. 2 disordered regions span residues 1–163 (PGQL…APTD) and 187–325 (RPDT…GPDK). Residues 198–208 (RPGPPGPPGPP) show a composition bias toward pro residues. Basic and acidic residues predominate over residues 237–249 (PKGDLGEKGERGP). Positions 292-304 (VPGPPGPPGPPGF) are enriched in pro residues.

Belongs to the fibril-associated collagens with interrupted helices (FACIT) family. Heterotrimer of an alpha 1(IX), an alpha 2(IX) and an alpha 3(IX) chain. Post-translationally, covalently linked to the telopeptides of type II collagen by lysine-derived cross-links. Prolines at the third position of the tripeptide repeating unit (G-X-Y) are hydroxylated in some or all of the chains.

The protein localises to the secreted. It localises to the extracellular space. It is found in the extracellular matrix. Its function is as follows. Structural component of hyaline cartilage and vitreous of the eye. This Rattus norvegicus (Rat) protein is Collagen alpha-1(IX) chain (Col9a1).